Reading from the N-terminus, the 803-residue chain is Ubiquitin carboxyl-terminal hydrolase 45 (803 aa).

Residues 1 to 34 (MRLKDPFSLKTADMTKRSNKPKKPRDEDSSDEVG) are disordered. The UBP-type zinc finger occupies 36-153 (LTCQHVSRAV…QTLDFLQKQS (118 aa)). 12 residues coordinate Zn(2+): Cys-38, His-40, Cys-62, Cys-65, Cys-85, Cys-88, Cys-93, His-100, His-104, His-113, Cys-126, and Cys-129. The 611-residue stretch at 192–802 (KGINNLGNTC…QAYLLFYEEL (611 aa)) folds into the USP domain. The active-site Nucleophile is Cys-201. The tract at residues 394-554 (PTNPARLGKS…LPSIRPQQGG (161 aa)) is disordered. Residues 403–417 (SGREQDSLTSHDDSL) show a composition bias toward basic and acidic residues. Composition is skewed to polar residues over residues 419 to 440 (AHSQ…SRHS) and 469 to 480 (SYRTDTMGSQSD). Over residues 502–531 (SEWSPRIPSVSSHSSTSDKTSITTTLSTTT) the composition is skewed to low complexity. The segment covering 532 to 545 (HNPSLKSNPSSTPL) has biased composition (polar residues). Catalysis depends on His-739, which acts as the Proton acceptor.

It belongs to the peptidase C19 family. In terms of tissue distribution, retina.

The protein localises to the photoreceptor inner segment. Its subcellular location is the cytoplasm. The protein resides in the nucleus. It carries out the reaction Thiol-dependent hydrolysis of ester, thioester, amide, peptide and isopeptide bonds formed by the C-terminal Gly of ubiquitin (a 76-residue protein attached to proteins as an intracellular targeting signal).. Catalyzes the deubiquitination of SPDL1. Plays a role in the repair of UV-induced DNA damage via deubiquitination of ERCC1, promoting its recruitment to DNA damage sites. May be involved in the maintenance of photoreceptor function. May play a role in normal retinal development. The sequence is that of Ubiquitin carboxyl-terminal hydrolase 45 from Danio rerio (Zebrafish).